We begin with the raw amino-acid sequence, 243 residues long: Small ribosomal subunit protein uS3 (243 aa).

One can recognise a KH type-2 domain in the interval 39–110 (IRGFIQKKYA…QVRINVVEIE (72 aa)). Positions 215 to 243 (DQPLPVGASPRRKGSRRPQQFEDRSNDGK) are disordered. Basic and acidic residues predominate over residues 233 to 243 (QQFEDRSNDGK).

The protein belongs to the universal ribosomal protein uS3 family. As to quaternary structure, part of the 30S ribosomal subunit. Forms a tight complex with proteins S10 and S14.

Its function is as follows. Binds the lower part of the 30S subunit head. Binds mRNA in the 70S ribosome, positioning it for translation. This is Small ribosomal subunit protein uS3 from Prochlorococcus marinus (strain MIT 9211).